We begin with the raw amino-acid sequence, 753 residues long: MAGLGRLDPGPRTVMPAWKREILERRRAKLAALSGGPGSGAAPDGPNERLVLAESLGPLSQNPFMRLESERRRGARPAQQLLELYCRVPGVRTIRADNILIIESAPGFPPAVPPASSIRAAEVVVYEEPQPGRVSRLLEKFDSPAAPRRRGSPERFRPALPQLPVAPASAATRAPTNRSLAPAPPVLPSQPAPPISPVPVAQRAGQRSACCEPAHPDGTAGPGARRSDFLQKTGSNSFTVHPRGLPGSAVNRSLSNGPMTQESPAGPANGLSGSPPVPGKWKPKVESKEPSLHPPPSPGTPSATPVGPPAFLAPSPASATPSQRQWVSSATSANDSFEIRPSSKPDMETIPIGDLQARALANLRVNSRNSFVLIPKRKAPGNYPSAAGRQFEEPKGEVGWASQSQGLGSQLVSTVDGAPALEKSSLAAEMQWAVREGGCPRPAISDTDKSVRRQRPASPPPFLPATTEAEPAEGLGVPGLTKNGQEPVRPGLPVTFIDEVDSEEAAFQEAKLPSSAVGVPSQYHLHPSTPGHTSELLNRGSNTFTVVPKRKPGTLQEPHLSQTNGQFQQGAEEQDADSLSGPHTTLENALKKRYPTVNEIEVIGGYLALQKSCLIKAGSSRKKMKISFNDKSLHTTFEYPSESSLAQEEAEEEEEEEEEEEGEDGEEEEVGPDSEKSFTVLLPRATFVSSVGPESSSGLSSYTPKHSMAFSKWQEQTLVQAPTEVELPPKEVMLTPASQNDLSDFRSEPALYF.

The segment at phenylalanine 141–glutamate 348 is disordered. Pro residues predominate over residues proline 182–proline 197. Composition is skewed to polar residues over residues leucine 230 to threonine 239 and valine 250 to serine 263. The residue at position 274 (serine 274) is a Phosphoserine. Low complexity predominate over residues threonine 300–serine 322. Positions glutamine 323–aspartate 335 are enriched in polar residues. A compositionally biased stretch (basic and acidic residues) spans phenylalanine 337–methionine 347. A phosphoserine mark is found at serine 402, serine 458, and serine 502. Residues glycine 438–valine 488 form a disordered region. Disordered regions lie at residues phenylalanine 544–histidine 583 and phenylalanine 637–lysine 676. Over residues histidine 559–alanine 571 the composition is skewed to polar residues. The segment covering glutamate 648–proline 672 has biased composition (acidic residues).

It belongs to the taperin family. Interacts with GRXCR2; the interaction restricts TPRN to the stereocilum basal region. Interacts with actin ACTB; the interaction may stabilize stereocilia. Interacts with CLIC5. Interacts with PTPRQ. TPRN, CLIC5 and PTPQR form concentric rings at the base of stereocilia and may form a complex. Interacts with phosphatase PPP1CA; the interaction results in inhibition of PPC1A phosphatase activity. Interacts with DNA damage response proteins XRCC6/KU70, XRCC5/KU80, PARP1, TOP1 and TOP2A; these interactions recruit TPRN to sites of DNA damage where it may play a role in DNA repair.

The protein resides in the cell projection. It is found in the stereocilium. Its subcellular location is the microvillus. The protein localises to the nucleus. It localises to the nucleoplasm. The protein resides in the cytoplasm. In terms of biological role, essential for hearing. Required for maintenance of stereocilia on both inner and outer hair cells. Necessary for the integrity of the stereociliary rootlet. May act as an actin cytoskeleton regulator involved in the regulation of actin dynamics at the pointed end in hair cells. Forms rings at the base of stereocilia and binds actin filaments in the stereocilia which may stabilize the stereocilia. Acts as a strong inhibitor of PPP1CA phosphatase activity. Recruited to sites of DNA damage and may play a role in DNA damage repair. This Rattus norvegicus (Rat) protein is Taperin (Tprn).